A 1394-amino-acid chain; its full sequence is Kinesin-like protein KIF27 (1394 aa).

Residues 5–341 form the Kinesin motor domain; the sequence is PIKVAVRIRP…LKYANRARNI (337 aa). 84–91 is an ATP binding site; the sequence is GQTGSGKT. Coiled coils occupy residues 352-418 and 493-554; these read QADR…IEQA and QVVF…ELAK. 2 disordered regions span residues 551–583 and 642–664; these read ELAK…PHTA and FSDN…SRSH. The segment covering 555–565 has biased composition (polar residues); it reads RSSSMPTSTKE. Residues 571–580 are compositionally biased toward basic and acidic residues; sequence PDARAPEKRP. Phosphoserine is present on residues Ser-643, Ser-646, Ser-672, Ser-675, and Ser-704. Residues 709-980 are a coiled coil; the sequence is LQKLRTSELI…NKKLRSSQAL (272 aa). Position 999 is a phosphoserine (Ser-999). Coiled-coil stretches lie at residues 1010–1078, 1118–1152, and 1187–1226; these read TEEK…SIQN, NKVI…HELE, and QDGE…RLKD. Basic and acidic residues predominate over residues 1267–1280; the sequence is TENTKLNGREKEVD. The interval 1267–1340 is disordered; the sequence is TENTKLNGRE…SQSPPPPQLQ (74 aa). Composition is skewed to polar residues over residues 1281–1295 and 1310–1320; these read NSSS…TQQI and APSSGQLQSSA. Phosphoserine occurs at positions 1365 and 1387. The segment at 1375–1394 is disordered; it reads SLGAGVRSVTADSLEEPEES.

Belongs to the TRAFAC class myosin-kinesin ATPase superfamily. Kinesin family. KIF27 subfamily. As to quaternary structure, interacts with STK36.

Its subcellular location is the cytoplasm. The protein localises to the cytoskeleton. The protein resides in the cell projection. It is found in the cilium. Plays an essential role in motile ciliogenesis. This chain is Kinesin-like protein KIF27 (Kif27), found in Rattus norvegicus (Rat).